Here is a 784-residue protein sequence, read N- to C-terminus: DNA repair and recombination protein RAD54-like (784 aa).

Residues 2–9 are required for chromatin remodeling, strand pairing activities and coupling of ATPase activity; sequence RRSLAPSQ. T22 carries the phosphothreonine modification. Positions 169-344 constitute a Helicase ATP-binding domain; that stretch reads EGKKGNFNGC…FSLVNFVNPE (176 aa). 182–189 provides a ligand contact to ATP; the sequence is DEMGLGKT. The short motif at 295-298 is the DEGH box element; it reads DEGH. One can recognise a Helicase C-terminal domain in the interval 501-658; it reads LLDFMLATIR…NNESAEKHFT (158 aa). The disordered stretch occupies residues 742–784; it reads QAIKESEETKQEAEDTSIPAKSKRKRSTTPESDDCNDEDFKGF. A compositionally biased stretch (basic and acidic residues) spans 745 to 754; that stretch reads KESEETKQEA.

This sequence belongs to the SNF2/RAD54 helicase family. In terms of assembly, interacts (via N-terminus) with spn-A/Rad51.

It localises to the nucleus. Functionally, involved in mitotic DNA repair and meiotic recombination. Functions in the recombinational DNA repair pathway. Essential for interhomolog gene conversion (GC), but may have a less important role in intersister GC than spn-A/Rad51. In the presence of DNA, spn-A/Rad51 enhances the ATPase activity of okr/Rad54. The protein is DNA repair and recombination protein RAD54-like of Drosophila willistoni (Fruit fly).